Consider the following 539-residue polypeptide: Tyrosinase (539 aa).

Cu cation contacts are provided by H63, H84, H93, H290, H294, and H333. A cross-link (2'-(S-cysteinyl)-histidine (Cys-His)) is located at residues 82 to 84 (CHH).

It belongs to the tyrosinase family. In terms of assembly, homotetramer. It depends on Cu(2+) as a cofactor. In terms of processing, the N-terminus is blocked.

The enzyme catalyses 2 L-dopa + O2 = 2 L-dopaquinone + 2 H2O. It catalyses the reaction L-tyrosine + O2 = L-dopaquinone + H2O. With respect to regulation, activated by acidifying treatment at pH 3.0. Its function is as follows. This is a copper-containing oxidase that functions in the formation of pigments such as melanins and other polyphenolic compounds. This chain is Tyrosinase (melO), found in Aspergillus oryzae (strain ATCC 42149 / RIB 40) (Yellow koji mold).